Consider the following 677-residue polypeptide: Polyunsaturated fatty acid lipoxygenase ALOX15B (677 aa).

One can recognise a PLAT domain in the interval 2 to 125; that stretch reads AKFRVRVSTG…ELVLREGAAK (124 aa). 8 residues coordinate Ca(2+): G15, G17, D39, H40, G42, E44, D86, and A87. The region spanning 126–677 is the Lipoxygenase domain; sequence VSWQDHHRTL…PPLIENSVSI (552 aa). Positions 374, 379, 554, and 677 each coordinate Fe cation.

It belongs to the lipoxygenase family. It depends on Fe cation as a cofactor.

It is found in the cytoplasm. The protein localises to the cytosol. Its subcellular location is the cell membrane. It localises to the cytoskeleton. The protein resides in the membrane. It is found in the cell junction. The protein localises to the adherens junction. Its subcellular location is the focal adhesion. It localises to the nucleus. The catalysed reaction is (5Z,8Z,11Z,14Z)-eicosatetraenoate + O2 = (15S)-hydroperoxy-(5Z,8Z,11Z,13E)-eicosatetraenoate. It carries out the reaction (9Z,12Z)-octadecadienoate + O2 = 13-hydroperoxy-(9Z,11E)-octadecadienoate. The enzyme catalyses (5S)-hydroxy-(6E,8Z,11Z,14Z)-eicosatetraenoate + O2 = (5S)-hydroxy-(15S)-hydroperoxy-(6E,8Z,11Z,13E)-eicosatetraenoate. It catalyses the reaction (5Z,8Z,11Z,14Z)-eicosatetraenoate + O2 = 5-hydroperoxy-(6E,8Z,11Z,14Z)-eicosatetraenoate. The catalysed reaction is (5S,6R)-dihydroxy-(7E,9E,11Z,14Z)-eicosatetraenoate + O2 = (5S,6R)-dihydroxy-(15S)-hydroperoxy-(7E,9E,11Z,13E)-eicosatetraenoate. It carries out the reaction (5S)-hydroperoxy-(6E,8Z,11Z,14Z)-eicosatetraenoate + O2 = (5S,15S)-dihydroperoxy-(6E,8Z,11Z,13E)-eicosatetraenoate. The enzyme catalyses 2-(5Z,8Z,11Z,14Z-eicosatetraenoyl)-glycerol + O2 = 2-[15(S)-hydroperoxy-(5Z,8Z,11Z,13E)-eicosatetraenoyl]-glycerol. It catalyses the reaction (8S)-hydroperoxy-(5Z,9E,11Z,14Z)-eicosatetraenoate + O2 = (8S,15S)-dihydroperoxy-(5Z,9E,11Z,13E)-eicosatetraenoate. The catalysed reaction is N-(5Z,8Z,11Z,14Z)-eicosatetraenoyl-L-alanine + O2 = N-(15S)-hydroperoxy-(5Z,8Z,11Z,13E)-eicosatetraenoyl-alanine. It carries out the reaction N-(5Z,8Z,11Z,14Z)-eicosatetraenoyl-gamma-aminobutanoate + O2 = N-(15S)-hydroperoxy-(5Z,8Z,11Z,13E)-eicosatetraenoyl-gamma-aminobutanoate. The enzyme catalyses N-(5Z,8Z,11Z,14Z)-eicosatetraenoyl-glycine + O2 = N-(15S)-hydroperoxy-(5Z,8Z,11Z,13E)-eicosatetraenoyl-glycine. It catalyses the reaction N-(5Z,8Z,11Z,14Z)-eicosatetraenoyl-taurine + O2 = N-(15S)-hydroperoxy-(5Z,8Z,11Z,13E)-eicosatetraenoyl-taurine. The catalysed reaction is 2-(5Z,8Z,11Z,14Z-eicosatetraenoyl)-glycerol + O2 = 2-[12-hydroperoxy-(5Z,8Z,10E,14Z)-eicosatetraenoyl]-glycerol. It carries out the reaction 1-octadecanoyl-2-(5Z,8Z,11Z,14Z-eicosatetraenoyl)-sn-glycero-3-phosphocholine + O2 = 1-octadecanoyl-2-(15-hydroperoxy-5Z,8Z,11Z,13E-eicosatetraenoyl)-sn-glycero-3-phosphocholine. The enzyme catalyses a 1-acyl-2-(5Z,8Z,11Z,14Z-eicosatetraenoyl)-sn-glycero-3-phospho-(1D-myo-inositol) + O2 = a 1-acyl-2-(15-hydroperoxy-5Z,8Z,11Z,13E-eicosatetraenoyl)-sn-glycero-3-phospho-(1D-myo-inositol). It catalyses the reaction a 1-acyl-2-(8Z,11Z,14Z-eicosatrienoyl)-sn-glycero-3-phospho-(1D-myo-inositol) + O2 = a 1-acyl-2-(15-hydroperoxy-8Z,11Z,13E-eicosatrienoyl)-sn-glycero-3-phospho-(1D-myo-inositol). The catalysed reaction is 1-octadecanoyl-2-(5Z,8Z,11Z,14Z)-eicosatetraenoyl-sn-glycero-3-phosphoethanolamine + O2 = 1-octadecanoyl-2-(15-hydroperoxy-5Z,8Z,11Z,13E-eicosatetraenoyl)-sn-glycero-3-phosphoethanolamine. It carries out the reaction 1-octadecanoyl-2-(5Z,8Z,11Z,14Z-eicosatetraenoyl)-sn-glycero-3-phospho-(1D-myo-inositol) + O2 = 1-octadecanoyl-2-(15-hydroperoxy-5Z,8Z,11Z,13E-eicosatetraenoyl)-sn-glycero-3-phospho-(1D-myo-inositol). The enzyme catalyses (8Z,11Z,14Z)-eicosatrienoate + O2 = 15-hydroperoxy-(8Z,11Z,13E)-eicosatrienoate. It catalyses the reaction (7S)-hydroperoxy-(4Z,8E,10Z,13Z,16Z,19Z)-docosahexaenoate + O2 = (7S,17S)-dihydroperoxy-(4Z,8E,10Z,13Z,15E,19Z)-docosahexaenoate. Its pathway is lipid metabolism; hydroperoxy eicosatetraenoic acid biosynthesis. Functionally, non-heme iron-containing dioxygenase that catalyzes the stereo-specific peroxidation of free and esterified polyunsaturated fatty acids (PUFAs) generating a spectrum of bioactive lipid mediators. Inserts a peroxyl group at C15 of arachidonate ((5Z,8Z,11Z,14Z)-eicosatetraenoate) producing (15S)-hydroperoxyeicosatetraenoate/(15S)-HPETE. Also peroxidizes linoleate ((9Z,12Z)-octadecadienoate) to 13-hydroperoxyoctadecadienoate/13-HPODE. Oxygenates arachidonyl derivatives such as 2-arachidonoylglycerol (2-AG) leading to the production and extracellular release of 15-hydroxyeicosatetraenoyl glycerol (15-HETE-G) that acts as a peroxisome proliferator-activated receptor alpha agonist. Has the ability to efficiently class-switch ALOX5 pro-inflammatory mediators into anti-inflammatory intermediates. Participates in the sequential oxidations of DHA ((4Z,7Z,10Z,13Z,16Z,19Z)-docosahexaenoate) to generate specialized pro-resolving mediators (SPMs) resolvin D5 ((7S,17S)-diHPDHA), which can actively down-regulate the immune response and have anti-aggregation properties with platelets. In addition to free PUFAs hydrolyzed from phospholipids, it directly oxidizes PUFAs esterified to membrane-bound phospholipids. Has no detectable 8S-lipoxygenase activity on arachidonate but reacts with (8S)-HPETE to produce (8S,15S)-diHPETE. May regulate progression through the cell cycle and cell proliferation. May also regulate cytokine secretion by macrophages and therefore play a role in the immune response. May also regulate macrophage differentiation into proatherogenic foam cells. The protein is Polyunsaturated fatty acid lipoxygenase ALOX15B of Rattus norvegicus (Rat).